The following is a 317-amino-acid chain: 2,3,4,5-tetrahydropyridine-2,6-dicarboxylate N-succinyltransferase (317 aa).

Positions 166 and 183 each coordinate Mg(2+). The active-site Acyl-anhydride intermediate is the Glu-199. Residues Arg-201, Gly-216, Ser-219, Ala-242, 257–258 (EA), Gly-265, Lys-277, and 290–293 (RRNS) contribute to the succinyl-CoA site.

It belongs to the type 2 tetrahydrodipicolinate N-succinyltransferase family. Homotrimer.

The protein resides in the cytoplasm. The catalysed reaction is (S)-2,3,4,5-tetrahydrodipicolinate + succinyl-CoA + H2O = (S)-2-succinylamino-6-oxoheptanedioate + CoA. It participates in amino-acid biosynthesis; L-lysine biosynthesis via DAP pathway; LL-2,6-diaminopimelate from (S)-tetrahydrodipicolinate (succinylase route): step 1/3. Functionally, catalyzes the conversion of the cyclic tetrahydrodipicolinate (THDP) into the acyclic N-succinyl-L-2-amino-6-oxopimelate using succinyl-CoA. The chain is 2,3,4,5-tetrahydropyridine-2,6-dicarboxylate N-succinyltransferase (dapD) from Mycobacterium tuberculosis (strain CDC 1551 / Oshkosh).